Reading from the N-terminus, the 238-residue chain is 4-hydroxy-tetrahydrodipicolinate reductase (238 aa).

G12–M17 is a binding site for NAD(+). R40 contacts NADP(+). Residues G93–T95 and A117–F120 each bind NAD(+). Catalysis depends on H149, which acts as the Proton donor/acceptor. H150 contributes to the (S)-2,3,4,5-tetrahydrodipicolinate binding site. K153 functions as the Proton donor in the catalytic mechanism. G159 to T160 serves as a coordination point for (S)-2,3,4,5-tetrahydrodipicolinate.

The protein belongs to the DapB family.

Its subcellular location is the cytoplasm. The catalysed reaction is (S)-2,3,4,5-tetrahydrodipicolinate + NAD(+) + H2O = (2S,4S)-4-hydroxy-2,3,4,5-tetrahydrodipicolinate + NADH + H(+). It carries out the reaction (S)-2,3,4,5-tetrahydrodipicolinate + NADP(+) + H2O = (2S,4S)-4-hydroxy-2,3,4,5-tetrahydrodipicolinate + NADPH + H(+). Its pathway is amino-acid biosynthesis; L-lysine biosynthesis via DAP pathway; (S)-tetrahydrodipicolinate from L-aspartate: step 4/4. Functionally, catalyzes the conversion of 4-hydroxy-tetrahydrodipicolinate (HTPA) to tetrahydrodipicolinate. In Xanthomonas campestris pv. campestris (strain 8004), this protein is 4-hydroxy-tetrahydrodipicolinate reductase.